Reading from the N-terminus, the 981-residue chain is Anoctamin-3 (981 aa).

Residues 1-22 show a composition bias toward polar residues; it reads MVHHSGSIQSFKQQKGMNISKS. Residues 1 to 33 form a disordered region; that stretch reads MVHHSGSIQSFKQQKGMNISKSEITKETSLKPS. The Cytoplasmic segment spans residues 1–403; that stretch reads MVHHSGSIQS…LYFAWLGWYT (403 aa). A helical transmembrane segment spans residues 404–424; it reads GMLIPAAIVGLCVFFYGLFTM. N-linked (GlcNAc...) asparagine glycans are attached at residues Asn425, Asn448, and Asn455. At 425–469 the chain is on the extracellular side; it reads NNSQVSQEICKATEVFMCPLCDKNCSLQRLNDSCIYAKVTYLFDN. Residues 470–490 form a helical membrane-spanning segment; sequence GGTVFFAIFMAIWATVFLEFW. Topologically, residues 491–550 are cytoplasmic; sequence KRRRSILTYTWDLIEWEEEEETLRPQFEAKYYKMEIVNPITGKPEPHQPSSDKVTRLLVS. A helical membrane pass occupies residues 551–571; the sequence is VSGIFFMISLVITAVFGVVVY. The Extracellular segment spans residues 572-592; it reads RLVVMEQFASFKWNFIKQYWQ. The chain crosses the membrane as a helical span at residues 593–613; that stretch reads FATSAAAVCINFIIIMLLNLA. Topologically, residues 614 to 640 are cytoplasmic; it reads YEKIAYLLTNLEYPRTESEWENSFALK. Residues 641 to 661 form a helical membrane-spanning segment; it reads MFLFQFVNLNSSIFYIAFFLG. Topologically, residues 662–761 are extracellular; the sequence is RFVGHPGKYN…MDEYLEMVLQ (100 aa). The chain crosses the membrane as a helical span at residues 762–782; sequence FGFTTIFVAAFPLAPLLALLN. At 783-810 the chain is on the cytoplasmic side; it reads NIIEIRLDAYKFVTQWRRPLPARATDIG. Residues 811 to 831 traverse the membrane as a helical segment; the sequence is IWLGILEGIGILAVITNAFVI. The Extracellular portion of the chain corresponds to 832–914; sequence AITSDYIPRF…QYWHILAARL (83 aa). Asn866 carries an N-linked (GlcNAc...) asparagine glycan. A helical transmembrane segment spans residues 915-935; that stretch reads AFIIVFEHLVFGIKSFIAYLI. At 936–981 the chain is on the cytoplasmic side; it reads PDVPKGLHDRIRREKYLVQEMMYEAELEHLQQQRRKSGQPVHHEWP.

It belongs to the anoctamin family. In terms of assembly, interacts with KCNT1/Slack. As to expression, highly expressed in the forebrain striatum.

The protein resides in the cell membrane. It catalyses the reaction a 1,2-diacyl-sn-glycero-3-phosphocholine(in) = a 1,2-diacyl-sn-glycero-3-phosphocholine(out). The enzyme catalyses a beta-D-galactosyl-(1&lt;-&gt;1')-N-acylsphing-4-enine(out) = a beta-D-galactosyl-(1&lt;-&gt;1')-N-acylsphing-4-enine(in). Has calcium-dependent phospholipid scramblase activity; scrambles phosphatidylcholine and galactosylceramide. Seems to act as potassium channel regulator and may inhibit pain signaling; can facilitate KCNT1/Slack channel activity by promoting its full single-channel conductance at very low sodium concentrations and by increasing its sodium sensitivity. Does not exhibit calcium-activated chloride channel (CaCC) activity. The polypeptide is Anoctamin-3 (ANO3) (Homo sapiens (Human)).